The following is a 744-amino-acid chain: Phosphoribosylformylglycinamidine synthase subunit PurL (744 aa).

His-50 is a catalytic residue. The ATP site is built by Tyr-53 and Lys-92. A Mg(2+)-binding site is contributed by Glu-94. Residues 95 to 98 (SHNH) and Arg-117 each bind substrate. His-96 (proton acceptor) is an active-site residue. Asp-118 provides a ligand contact to Mg(2+). Gln-241 contacts substrate. Residue Asp-269 participates in Mg(2+) binding. 313–315 (ESQ) contributes to the substrate binding site. ATP contacts are provided by Asp-494 and Gly-531. Position 532 (Asn-532) interacts with Mg(2+). Substrate is bound at residue Ser-534.

The protein belongs to the FGAMS family. In terms of assembly, monomer. Part of the FGAM synthase complex composed of 1 PurL, 1 PurQ and 2 PurS subunits.

It is found in the cytoplasm. The catalysed reaction is N(2)-formyl-N(1)-(5-phospho-beta-D-ribosyl)glycinamide + L-glutamine + ATP + H2O = 2-formamido-N(1)-(5-O-phospho-beta-D-ribosyl)acetamidine + L-glutamate + ADP + phosphate + H(+). It participates in purine metabolism; IMP biosynthesis via de novo pathway; 5-amino-1-(5-phospho-D-ribosyl)imidazole from N(2)-formyl-N(1)-(5-phospho-D-ribosyl)glycinamide: step 1/2. Part of the phosphoribosylformylglycinamidine synthase complex involved in the purines biosynthetic pathway. Catalyzes the ATP-dependent conversion of formylglycinamide ribonucleotide (FGAR) and glutamine to yield formylglycinamidine ribonucleotide (FGAM) and glutamate. The FGAM synthase complex is composed of three subunits. PurQ produces an ammonia molecule by converting glutamine to glutamate. PurL transfers the ammonia molecule to FGAR to form FGAM in an ATP-dependent manner. PurS interacts with PurQ and PurL and is thought to assist in the transfer of the ammonia molecule from PurQ to PurL. This Chelativorans sp. (strain BNC1) protein is Phosphoribosylformylglycinamidine synthase subunit PurL.